Here is a 209-residue protein sequence, read N- to C-terminus: NAD(P)H-quinone oxidoreductase subunit K 2 (209 aa).

Positions 53, 54, 118, and 149 each coordinate [4Fe-4S] cluster.

The protein belongs to the complex I 20 kDa subunit family. In terms of assembly, NDH-1 can be composed of about 15 different subunits; different subcomplexes with different compositions have been identified which probably have different functions. The cofactor is [4Fe-4S] cluster.

It is found in the cellular thylakoid membrane. The catalysed reaction is a plastoquinone + NADH + (n+1) H(+)(in) = a plastoquinol + NAD(+) + n H(+)(out). The enzyme catalyses a plastoquinone + NADPH + (n+1) H(+)(in) = a plastoquinol + NADP(+) + n H(+)(out). NDH-1 shuttles electrons from an unknown electron donor, via FMN and iron-sulfur (Fe-S) centers, to quinones in the respiratory and/or the photosynthetic chain. The immediate electron acceptor for the enzyme in this species is believed to be plastoquinone. Couples the redox reaction to proton translocation, and thus conserves the redox energy in a proton gradient. Cyanobacterial NDH-1 also plays a role in inorganic carbon-concentration. This Acaryochloris marina (strain MBIC 11017) protein is NAD(P)H-quinone oxidoreductase subunit K 2.